The chain runs to 262 residues: MGLEARHCCMFLLVFASLSVEIRADCSKDCASCALHLGQQREINSLACTLECEGKLPSAKAWGTCKELLLLTKVDNVQDGEKYQDNNDSHYAAKKYGGFMKRYGGFMKKMDELYHAEPEEDDAGGEILAKNYGGFMKKEYDSDRDAADLLRELLATSGDPESSIYHDNNSETPGEINKRYGGFMRGYRRSTDLEDETSGIQKRYGGFMRRVGRPEWWEDYQKRYGGFMTRFTDSFLPSDEDGESYSKENPDMEKRYGGFMRF.

A signal peptide spans 1-24 (MGLEARHCCMFLLVFASLSVEIRA). 3 disulfide bridges follow: Cys26/Cys48, Cys30/Cys52, and Cys33/Cys65. 5 consecutive propeptides follow at residues 110 to 131 (MDEL…LAKN), 139 to 177 (EYDS…GEIN), 190 to 201 (STDLEDETSGIQ), 211 to 221 (VGRPEWWEDYQ), and 229 to 253 (TRFT…PDME).

The protein belongs to the opioid neuropeptide precursor family. Post-translationally, the N-terminal domain contains 6 conserved cysteines thought to be involved in disulfide bonding and/or processing.

The protein localises to the secreted. In terms of biological role, enkephalin neuropeptides compete with and mimic the effects of opiate drugs. They play a role in a number of physiologic functions, including pain perception and responses to stress. The protein is Proenkephalin-A-A (penk-a) of Xenopus laevis (African clawed frog).